Reading from the N-terminus, the 430-residue chain is Enolase (430 aa).

A (2R)-2-phosphoglycerate-binding site is contributed by Q167. The active-site Proton donor is the E209. D245, E286, and D313 together coordinate Mg(2+). Residues K338, R367, S368, and K389 each coordinate (2R)-2-phosphoglycerate. K338 (proton acceptor) is an active-site residue.

Belongs to the enolase family. It depends on Mg(2+) as a cofactor.

The protein resides in the cytoplasm. Its subcellular location is the secreted. It localises to the cell surface. The enzyme catalyses (2R)-2-phosphoglycerate = phosphoenolpyruvate + H2O. It functions in the pathway carbohydrate degradation; glycolysis; pyruvate from D-glyceraldehyde 3-phosphate: step 4/5. Catalyzes the reversible conversion of 2-phosphoglycerate (2-PG) into phosphoenolpyruvate (PEP). It is essential for the degradation of carbohydrates via glycolysis. This chain is Enolase, found in Synechococcus sp. (strain CC9605).